A 592-amino-acid polypeptide reads, in one-letter code: Arginine--tRNA ligase (592 aa).

The 'HIGH' region motif lies at 123–133 (PNTNKPLHLGH).

This sequence belongs to the class-I aminoacyl-tRNA synthetase family. As to quaternary structure, monomer.

Its subcellular location is the cytoplasm. It carries out the reaction tRNA(Arg) + L-arginine + ATP = L-arginyl-tRNA(Arg) + AMP + diphosphate. This chain is Arginine--tRNA ligase, found in Flavobacterium johnsoniae (strain ATCC 17061 / DSM 2064 / JCM 8514 / BCRC 14874 / CCUG 350202 / NBRC 14942 / NCIMB 11054 / UW101) (Cytophaga johnsonae).